Reading from the N-terminus, the 416-residue chain is Gamma-glutamyl phosphate reductase (416 aa).

This sequence belongs to the gamma-glutamyl phosphate reductase family.

Its subcellular location is the cytoplasm. The catalysed reaction is L-glutamate 5-semialdehyde + phosphate + NADP(+) = L-glutamyl 5-phosphate + NADPH + H(+). It participates in amino-acid biosynthesis; L-proline biosynthesis; L-glutamate 5-semialdehyde from L-glutamate: step 2/2. Functionally, catalyzes the NADPH-dependent reduction of L-glutamate 5-phosphate into L-glutamate 5-semialdehyde and phosphate. The product spontaneously undergoes cyclization to form 1-pyrroline-5-carboxylate. The chain is Gamma-glutamyl phosphate reductase from Streptococcus uberis (strain ATCC BAA-854 / 0140J).